The sequence spans 378 residues: Chaperone protein DnaJ (378 aa).

A J domain is found at 5 to 69; the sequence is EYYDRLGVSK…QKRAAYDQYG (65 aa). A CR-type zinc finger spans residues 134–216; that stretch reads GVEKEVSYNR…CHGTGHEKQA (83 aa). Zn(2+) contacts are provided by C147, C150, C164, C167, C190, C193, C204, and C207. 4 CXXCXGXG motif repeats span residues 147 to 154, 164 to 171, 190 to 197, and 204 to 211; these read CGTCLGSG, CRKCHGSG, CDICHGSG, and CQTCHGTG.

This sequence belongs to the DnaJ family. As to quaternary structure, homodimer. Requires Zn(2+) as cofactor.

The protein localises to the cytoplasm. Functionally, participates actively in the response to hyperosmotic and heat shock by preventing the aggregation of stress-denatured proteins and by disaggregating proteins, also in an autonomous, DnaK-independent fashion. Unfolded proteins bind initially to DnaJ; upon interaction with the DnaJ-bound protein, DnaK hydrolyzes its bound ATP, resulting in the formation of a stable complex. GrpE releases ADP from DnaK; ATP binding to DnaK triggers the release of the substrate protein, thus completing the reaction cycle. Several rounds of ATP-dependent interactions between DnaJ, DnaK and GrpE are required for fully efficient folding. Also involved, together with DnaK and GrpE, in the DNA replication of plasmids through activation of initiation proteins. The chain is Chaperone protein DnaJ from Streptococcus pyogenes.